Reading from the N-terminus, the 207-residue chain is Holliday junction branch migration complex subunit RuvA (207 aa).

A domain I region spans residues 1–68 (MIGYLQGSLA…EDQWLLFGFL (68 aa)). The segment at 69-147 (QMAERDLFRQ…EWREEAGLLP (79 aa)) is domain II. Residues 148-158 (SATAAPIAAVQ) are flexible linker. Residues 158–207 (QEDVEMTLLALGYNNREILQALTAIAQENLVQSGQPAEDWIREAIAWLSR) form a domain III region.

Belongs to the RuvA family. As to quaternary structure, homotetramer. Forms an RuvA(8)-RuvB(12)-Holliday junction (HJ) complex. HJ DNA is sandwiched between 2 RuvA tetramers; dsDNA enters through RuvA and exits via RuvB. An RuvB hexamer assembles on each DNA strand where it exits the tetramer. Each RuvB hexamer is contacted by two RuvA subunits (via domain III) on 2 adjacent RuvB subunits; this complex drives branch migration. In the full resolvosome a probable DNA-RuvA(4)-RuvB(12)-RuvC(2) complex forms which resolves the HJ.

It localises to the cytoplasm. Functionally, the RuvA-RuvB-RuvC complex processes Holliday junction (HJ) DNA during genetic recombination and DNA repair, while the RuvA-RuvB complex plays an important role in the rescue of blocked DNA replication forks via replication fork reversal (RFR). RuvA specifically binds to HJ cruciform DNA, conferring on it an open structure. The RuvB hexamer acts as an ATP-dependent pump, pulling dsDNA into and through the RuvAB complex. HJ branch migration allows RuvC to scan DNA until it finds its consensus sequence, where it cleaves and resolves the cruciform DNA. The protein is Holliday junction branch migration complex subunit RuvA of Synechococcus elongatus (strain ATCC 33912 / PCC 7942 / FACHB-805) (Anacystis nidulans R2).